We begin with the raw amino-acid sequence, 251 residues long: Ubiquinone/menaquinone biosynthesis C-methyltransferase UbiE (251 aa).

Residues threonine 74, aspartate 95, 123 to 124 (NA), and serine 140 each bind S-adenosyl-L-methionine.

Belongs to the class I-like SAM-binding methyltransferase superfamily. MenG/UbiE family.

The enzyme catalyses a 2-demethylmenaquinol + S-adenosyl-L-methionine = a menaquinol + S-adenosyl-L-homocysteine + H(+). It carries out the reaction a 2-methoxy-6-(all-trans-polyprenyl)benzene-1,4-diol + S-adenosyl-L-methionine = a 5-methoxy-2-methyl-3-(all-trans-polyprenyl)benzene-1,4-diol + S-adenosyl-L-homocysteine + H(+). Its pathway is quinol/quinone metabolism; menaquinone biosynthesis; menaquinol from 1,4-dihydroxy-2-naphthoate: step 2/2. It participates in cofactor biosynthesis; ubiquinone biosynthesis. In terms of biological role, methyltransferase required for the conversion of demethylmenaquinol (DMKH2) to menaquinol (MKH2) and the conversion of 2-polyprenyl-6-methoxy-1,4-benzoquinol (DDMQH2) to 2-polyprenyl-3-methyl-6-methoxy-1,4-benzoquinol (DMQH2). This is Ubiquinone/menaquinone biosynthesis C-methyltransferase UbiE from Serratia proteamaculans (strain 568).